Consider the following 243-residue polypeptide: Pyrimidodiazepine synthase (243 aa).

One can recognise a GST N-terminal domain in the interval 20–102 (GILRLYSMRF…YLDEQYPLRP (83 aa)). Residue C30 is the Nucleophile of the active site. Glutathione-binding positions include K57, V70, and 86–87 (ES). Residues 107 to 230 (DPLKKVQDKL…VQAEFLRTRS (124 aa)) enclose the GST C-terminal domain.

This sequence belongs to the GST superfamily. Omega family. Homodimer.

It catalyses the reaction 2-amino-6-acetyl-3,7,8,9-tetrahydro-3H-pyrimido[4,5-b][1,4]diazepin-4-one + glutathione disulfide + H2O = 6-pyruvoyl-5,6,7,8-tetrahydropterin + 2 glutathione. Mediates the conversion of 2-amino-4-oxo-6-pyruvoyl-5,6,7,8-tetrahydropteridine (6-PTP; also named 6-pyruvoyltetrahydropterin) to 2-amino-6-acetyl-3,7,8,9-tetrahydro-3H-pyrimido(4,5-b)[1,4]diazepin-4-one (pyrimidodiazepine or PDA), a key intermediate in red eye pigment drosopterin biosynthesis. The chain is Pyrimidodiazepine synthase from Drosophila melanogaster (Fruit fly).